Reading from the N-terminus, the 391-residue chain is 1-deoxy-D-xylulose 5-phosphate reductoisomerase (391 aa).

NADPH contacts are provided by Thr-17, Gly-18, Ser-19, Ile-20, Asn-47, and Asn-130. A 1-deoxy-D-xylulose 5-phosphate-binding site is contributed by Lys-131. An NADPH-binding site is contributed by Glu-132. Asp-156 contacts Mn(2+). Residues Ser-157, Glu-158, Ser-182, and His-205 each coordinate 1-deoxy-D-xylulose 5-phosphate. Mn(2+) is bound at residue Glu-158. An NADPH-binding site is contributed by Gly-211. 1-deoxy-D-xylulose 5-phosphate contacts are provided by Ser-218, Asn-223, Lys-224, and Glu-227. Glu-227 contributes to the Mn(2+) binding site.

This sequence belongs to the DXR family. It depends on Mg(2+) as a cofactor. Mn(2+) serves as cofactor.

The enzyme catalyses 2-C-methyl-D-erythritol 4-phosphate + NADP(+) = 1-deoxy-D-xylulose 5-phosphate + NADPH + H(+). It functions in the pathway isoprenoid biosynthesis; isopentenyl diphosphate biosynthesis via DXP pathway; isopentenyl diphosphate from 1-deoxy-D-xylulose 5-phosphate: step 1/6. In terms of biological role, catalyzes the NADPH-dependent rearrangement and reduction of 1-deoxy-D-xylulose-5-phosphate (DXP) to 2-C-methyl-D-erythritol 4-phosphate (MEP). This Sinorhizobium fredii (strain NBRC 101917 / NGR234) protein is 1-deoxy-D-xylulose 5-phosphate reductoisomerase.